Here is an 88-residue protein sequence, read N- to C-terminus: Large ribosomal subunit protein bL27 (88 aa).

The segment at Met1 to Leu21 is disordered.

The protein belongs to the bacterial ribosomal protein bL27 family.

The polypeptide is Large ribosomal subunit protein bL27 (Methylobacterium nodulans (strain LMG 21967 / CNCM I-2342 / ORS 2060)).